Here is a 296-residue protein sequence, read N- to C-terminus: 4-hydroxy-tetrahydrodipicolinate synthase (296 aa).

Position 49 (Thr49) interacts with pyruvate. Catalysis depends on Tyr137, which acts as the Proton donor/acceptor. Lys166 (schiff-base intermediate with substrate) is an active-site residue. Ile208 contributes to the pyruvate binding site.

This sequence belongs to the DapA family. As to quaternary structure, homotetramer; dimer of dimers.

The protein resides in the cytoplasm. It catalyses the reaction L-aspartate 4-semialdehyde + pyruvate = (2S,4S)-4-hydroxy-2,3,4,5-tetrahydrodipicolinate + H2O + H(+). The protein operates within amino-acid biosynthesis; L-lysine biosynthesis via DAP pathway; (S)-tetrahydrodipicolinate from L-aspartate: step 3/4. Catalyzes the condensation of (S)-aspartate-beta-semialdehyde [(S)-ASA] and pyruvate to 4-hydroxy-tetrahydrodipicolinate (HTPA). This Chlorobium phaeovibrioides (strain DSM 265 / 1930) (Prosthecochloris vibrioformis (strain DSM 265)) protein is 4-hydroxy-tetrahydrodipicolinate synthase.